Here is a 154-residue protein sequence, read N- to C-terminus: D-aminoacyl-tRNA deacylase (154 aa).

The Gly-cisPro motif, important for rejection of L-amino acids signature appears at G142 to P143.

It belongs to the DTD family. In terms of assembly, homodimer.

The protein localises to the cytoplasm. It carries out the reaction glycyl-tRNA(Ala) + H2O = tRNA(Ala) + glycine + H(+). The catalysed reaction is a D-aminoacyl-tRNA + H2O = a tRNA + a D-alpha-amino acid + H(+). An aminoacyl-tRNA editing enzyme that deacylates mischarged D-aminoacyl-tRNAs. Also deacylates mischarged glycyl-tRNA(Ala), protecting cells against glycine mischarging by AlaRS. Acts via tRNA-based rather than protein-based catalysis; rejects L-amino acids rather than detecting D-amino acids in the active site. By recycling D-aminoacyl-tRNA to D-amino acids and free tRNA molecules, this enzyme counteracts the toxicity associated with the formation of D-aminoacyl-tRNA entities in vivo and helps enforce protein L-homochirality. This chain is D-aminoacyl-tRNA deacylase, found in Acidovorax sp. (strain JS42).